Here is a 318-residue protein sequence, read N- to C-terminus: Sucrose operon repressor (318 aa).

The HTH lacI-type domain occupies 1 to 56 (MIKLEDVANKAGVSVTTVSRVINRKGYLSDATISKVEKAMQDLHYIPNAAARSLQG). A DNA-binding region (H-T-H motif) is located at residues 4 to 23 (LEDVANKAGVSVTTVSRVIN).

This protein may control the expression of the genes that are involved in the transport and catabolism of sucrose. The protein is Sucrose operon repressor (sacR) of Lactococcus lactis subsp. lactis (Streptococcus lactis).